Reading from the N-terminus, the 288-residue chain is ATP synthase gamma chain (288 aa).

This sequence belongs to the ATPase gamma chain family. In terms of assembly, F-type ATPases have 2 components, CF(1) - the catalytic core - and CF(0) - the membrane proton channel. CF(1) has five subunits: alpha(3), beta(3), gamma(1), delta(1), epsilon(1). CF(0) has three main subunits: a, b and c.

The protein resides in the cell inner membrane. Functionally, produces ATP from ADP in the presence of a proton gradient across the membrane. The gamma chain is believed to be important in regulating ATPase activity and the flow of protons through the CF(0) complex. This chain is ATP synthase gamma chain, found in Actinobacillus pleuropneumoniae serotype 3 (strain JL03).